The following is a 692-amino-acid chain: Glycine--tRNA ligase beta subunit (692 aa).

This sequence belongs to the class-II aminoacyl-tRNA synthetase family. In terms of assembly, tetramer of two alpha and two beta subunits.

The protein localises to the cytoplasm. It carries out the reaction tRNA(Gly) + glycine + ATP = glycyl-tRNA(Gly) + AMP + diphosphate. This Limosilactobacillus fermentum (strain NBRC 3956 / LMG 18251) (Lactobacillus fermentum) protein is Glycine--tRNA ligase beta subunit.